The chain runs to 182 residues: Large ribosomal subunit protein bL25 (182 aa).

This sequence belongs to the bacterial ribosomal protein bL25 family. CTC subfamily. Part of the 50S ribosomal subunit; part of the 5S rRNA/L5/L18/L25 subcomplex. Contacts the 5S rRNA. Binds to the 5S rRNA independently of L5 and L18.

This is one of the proteins that binds to the 5S RNA in the ribosome where it forms part of the central protuberance. This Borrelia turicatae (strain 91E135) protein is Large ribosomal subunit protein bL25.